The sequence spans 166 residues: Phospholipase A2 inhibitor clone 10 (166 aa).

The signal sequence occupies residues Met-1–Gly-19. The region spanning Leu-46 to Glu-161 is the C-type lectin domain. 2 cysteine pairs are disulfide-bonded: Cys-83-Cys-160 and Cys-138-Cys-152. The N-linked (GlcNAc...) asparagine glycan is linked to Asn-122.

It belongs to the alpha-type phospholipase A2 inhibitor family. In terms of assembly, homotrimer; non-covalently linked. In terms of tissue distribution, expressed by the liver.

The protein resides in the secreted. Functionally, this phospholipase A2 inhibitor binds directly phospholipase A2 in the presence or absence of calcium. This chain is Phospholipase A2 inhibitor clone 10, found in Bothrops moojeni (Lance-headed viper).